Reading from the N-terminus, the 196-residue chain is Ribosomal RNA small subunit methyltransferase G (196 aa).

Residues Gly77, Phe82, 127-128, and Arg140 each bind S-adenosyl-L-methionine; that span reads AE.

This sequence belongs to the methyltransferase superfamily. RNA methyltransferase RsmG family.

The protein resides in the cytoplasm. Its function is as follows. Specifically methylates the N7 position of a guanine in 16S rRNA. This Aquifex aeolicus (strain VF5) protein is Ribosomal RNA small subunit methyltransferase G.